We begin with the raw amino-acid sequence, 308 residues long: D-alanine--D-alanine ligase (308 aa).

The ATP-grasp domain maps to 104–301 (KQIWQGSDLP…FDELCVAILE (198 aa)). 130–185 (IAELGLPVIIKPVHEGSSVGMSKVEKAEDFAAAIEKATQHDAVVMAEKWITGREFT) is an ATP binding site. Mg(2+) is bound by residues D255, E268, and N270.

Belongs to the D-alanine--D-alanine ligase family. Mg(2+) is required as a cofactor. The cofactor is Mn(2+).

It is found in the cytoplasm. It catalyses the reaction 2 D-alanine + ATP = D-alanyl-D-alanine + ADP + phosphate + H(+). It participates in cell wall biogenesis; peptidoglycan biosynthesis. Functionally, cell wall formation. The protein is D-alanine--D-alanine ligase of Acinetobacter baumannii (strain ACICU).